The sequence spans 172 residues: MKQHPLAQYLEAVPDFPKEGILFQDISPLLRDHFVATIDAMSLLFSAKEWAEVDYLVGVESRGFIFASALALKHDKGFVKVRKPGKLPNVHASMEYGLEYGTDKLEMQKGNGKKVIICDDLIATGGSMQAAAKLCNEVGYEVVGMACLVDLKALNSFSHDGMTVRSVIQFDD.

The protein belongs to the purine/pyrimidine phosphoribosyltransferase family. Homodimer.

The protein localises to the cytoplasm. It carries out the reaction AMP + diphosphate = 5-phospho-alpha-D-ribose 1-diphosphate + adenine. Its pathway is purine metabolism; AMP biosynthesis via salvage pathway; AMP from adenine: step 1/1. Catalyzes a salvage reaction resulting in the formation of AMP, that is energically less costly than de novo synthesis. This chain is Adenine phosphoribosyltransferase, found in Hydrogenovibrio crunogenus (strain DSM 25203 / XCL-2) (Thiomicrospira crunogena).